The sequence spans 66 residues: Large ribosomal subunit protein bL33c (66 aa).

It belongs to the bacterial ribosomal protein bL33 family.

It is found in the plastid. The protein localises to the chloroplast. This is Large ribosomal subunit protein bL33c (rpl33) from Arabidopsis thaliana (Mouse-ear cress).